Consider the following 424-residue polypeptide: Glutamyl-tRNA reductase (424 aa).

Residues 51 to 54 (TCNR), Ser99, 104 to 106 (EDQ), and Gln110 contribute to the substrate site. Residue Cys52 is the Nucleophile of the active site. Residue 179 to 184 (GGGEMG) participates in NADP(+) binding.

This sequence belongs to the glutamyl-tRNA reductase family. As to quaternary structure, homodimer.

The enzyme catalyses (S)-4-amino-5-oxopentanoate + tRNA(Glu) + NADP(+) = L-glutamyl-tRNA(Glu) + NADPH + H(+). Its pathway is porphyrin-containing compound metabolism; protoporphyrin-IX biosynthesis; 5-aminolevulinate from L-glutamyl-tRNA(Glu): step 1/2. In terms of biological role, catalyzes the NADPH-dependent reduction of glutamyl-tRNA(Glu) to glutamate 1-semialdehyde (GSA). This chain is Glutamyl-tRNA reductase, found in Methanocorpusculum labreanum (strain ATCC 43576 / DSM 4855 / Z).